The primary structure comprises 354 residues: UDP-N-acetylglucosamine--N-acetylmuramyl-(pentapeptide) pyrophosphoryl-undecaprenol N-acetylglucosamine transferase 1 (354 aa).

Residues 12 to 14 (TAG), arginine 163, serine 193, and glutamine 287 contribute to the UDP-N-acetyl-alpha-D-glucosamine site.

This sequence belongs to the glycosyltransferase 28 family. MurG subfamily.

Its subcellular location is the cell membrane. The catalysed reaction is di-trans,octa-cis-undecaprenyl diphospho-N-acetyl-alpha-D-muramoyl-L-alanyl-D-glutamyl-meso-2,6-diaminopimeloyl-D-alanyl-D-alanine + UDP-N-acetyl-alpha-D-glucosamine = di-trans,octa-cis-undecaprenyl diphospho-[N-acetyl-alpha-D-glucosaminyl-(1-&gt;4)]-N-acetyl-alpha-D-muramoyl-L-alanyl-D-glutamyl-meso-2,6-diaminopimeloyl-D-alanyl-D-alanine + UDP + H(+). It participates in cell wall biogenesis; peptidoglycan biosynthesis. Its function is as follows. Cell wall formation. Catalyzes the transfer of a GlcNAc subunit on undecaprenyl-pyrophosphoryl-MurNAc-pentapeptide (lipid intermediate I) to form undecaprenyl-pyrophosphoryl-MurNAc-(pentapeptide)GlcNAc (lipid intermediate II). In Bacillus thuringiensis (strain Al Hakam), this protein is UDP-N-acetylglucosamine--N-acetylmuramyl-(pentapeptide) pyrophosphoryl-undecaprenol N-acetylglucosamine transferase 1.